The following is a 156-amino-acid chain: MPRKGHVTKRDVLADPVYNSKLVTKLINHLMIDGKRAKASSILYDAFNIVQDKTGKEPLDVFEEAMNNVMPVLEVRARRIGGSNYQIPVEVRPERRTTLGLRWLVSYARLRNEHTMDERLANEIIDASNNTGSAVKKREDVHRMAEANRAFAHYRF.

The protein belongs to the universal ribosomal protein uS7 family. As to quaternary structure, part of the 30S ribosomal subunit. Contacts proteins S9 and S11.

In terms of biological role, one of the primary rRNA binding proteins, it binds directly to 16S rRNA where it nucleates assembly of the head domain of the 30S subunit. Is located at the subunit interface close to the decoding center, probably blocks exit of the E-site tRNA. The sequence is that of Small ribosomal subunit protein uS7 from Lactobacillus acidophilus (strain ATCC 700396 / NCK56 / N2 / NCFM).